The sequence spans 232 residues: 2,3,4,5-tetrahydropyridine-2,6-dicarboxylate N-acetyltransferase (232 aa).

Belongs to the transferase hexapeptide repeat family. DapH subfamily.

It catalyses the reaction (S)-2,3,4,5-tetrahydrodipicolinate + acetyl-CoA + H2O = L-2-acetamido-6-oxoheptanedioate + CoA. It participates in amino-acid biosynthesis; L-lysine biosynthesis via DAP pathway; LL-2,6-diaminopimelate from (S)-tetrahydrodipicolinate (acetylase route): step 1/3. Its function is as follows. Catalyzes the transfer of an acetyl group from acetyl-CoA to tetrahydrodipicolinate. This chain is 2,3,4,5-tetrahydropyridine-2,6-dicarboxylate N-acetyltransferase, found in Streptococcus pneumoniae (strain CGSP14).